We begin with the raw amino-acid sequence, 684 residues long: Pre-mRNA-splicing factor CLF1 (684 aa).

14 HAT repeats span residues 43-75 (DWQR…FEFD), 77-109 (KDIR…SEIK), 111-143 (KNIN…LEES), 145-176 (GNQG…FETR), 178-209 (LNFE…FEQT), 211-251 (GDIS…WEAS), 253-285 (GEYE…FEKK), 295-327 (IVIA…LVEE), 332-364 (QLTS…ICVR), 374-410 (NDLP…FEIR), 412-443 (NNLL…LEIR), 445-477 (KEFD…LEEN), 518-550 (AEYE…FEST), and 584-622 (ENKH…YEKV).

Belongs to the crooked-neck family. Associated with the spliceosome.

Its subcellular location is the nucleus. Involved in pre-mRNA splicing and cell cycle progression. Required for the spliceosome assembly and initiation of the DNA replication. This Kluyveromyces lactis (strain ATCC 8585 / CBS 2359 / DSM 70799 / NBRC 1267 / NRRL Y-1140 / WM37) (Yeast) protein is Pre-mRNA-splicing factor CLF1 (CLF1).